The primary structure comprises 28 residues: Metallothionein-like protein type 2 LSC210 (28 aa).

This sequence belongs to the metallothionein superfamily. Type 15 family.

Metallothioneins have a high content of cysteine residues that bind various heavy metals. The sequence is that of Metallothionein-like protein type 2 LSC210 (LSC210) from Brassica napus (Rape).